A 142-amino-acid chain; its full sequence is Large ribosomal subunit protein uL13 (142 aa).

This sequence belongs to the universal ribosomal protein uL13 family. As to quaternary structure, part of the 50S ribosomal subunit.

Its function is as follows. This protein is one of the early assembly proteins of the 50S ribosomal subunit, although it is not seen to bind rRNA by itself. It is important during the early stages of 50S assembly. The sequence is that of Large ribosomal subunit protein uL13 from Shewanella frigidimarina (strain NCIMB 400).